A 462-amino-acid chain; its full sequence is Alanine racemase (462 aa).

The Proton acceptor; specific for D-alanine role is filled by Lys-34. Residue Lys-34 is modified to N6-(pyridoxal phosphate)lysine. Positions 73 to 132 (ASWHESVFRHCEKNYTVIRRSNPVKNSVSQNFFNYFSGLQQCFAPRNDGSSIHATTPKAL) are unknown insert. Arg-193 serves as a coordination point for substrate. The 47-residue stretch at 286–332 (DLSNNLSYKEEFEGDTERRTAAYINVREDSSTGSTYKLPLEGGYSRG) folds into the RPE1 insert domain. Tyr-357 serves as the catalytic Proton acceptor; specific for L-alanine. Met-405 provides a ligand contact to substrate.

It belongs to the alanine racemase family. The cofactor is pyridoxal 5'-phosphate.

It carries out the reaction L-alanine = D-alanine. It functions in the pathway amino-acid biosynthesis; D-alanine biosynthesis; D-alanine from L-alanine: step 1/1. Its function is as follows. Catalyzes the interconversion of L-alanine and D-alanine. May also act on other amino acids. In Rickettsia felis (strain ATCC VR-1525 / URRWXCal2) (Rickettsia azadi), this protein is Alanine racemase (alr).